The chain runs to 441 residues: Tol-Pal system protein TolB (441 aa).

The first 39 residues, 1-39, serve as a signal peptide directing secretion; it reads MPAMTPAFRRADLTGFLRTYGAALILLLAAMLAWQPAQA.

Belongs to the TolB family. The Tol-Pal system is composed of five core proteins: the inner membrane proteins TolA, TolQ and TolR, the periplasmic protein TolB and the outer membrane protein Pal. They form a network linking the inner and outer membranes and the peptidoglycan layer.

The protein resides in the periplasm. In terms of biological role, part of the Tol-Pal system, which plays a role in outer membrane invagination during cell division and is important for maintaining outer membrane integrity. This chain is Tol-Pal system protein TolB, found in Bordetella parapertussis (strain 12822 / ATCC BAA-587 / NCTC 13253).